Reading from the N-terminus, the 294-residue chain is Flagellin B1 (294 aa).

Positions 1–8 (MKTRTRKG) are excised as a propeptide.

It belongs to the archaeal flagellin family.

The protein resides in the archaeal flagellum. In terms of biological role, flagellin is the subunit protein which polymerizes to form the filaments of archaeal flagella. The chain is Flagellin B1 (flaB1) from Thermococcus kodakarensis (strain ATCC BAA-918 / JCM 12380 / KOD1) (Pyrococcus kodakaraensis (strain KOD1)).